Consider the following 56-residue polypeptide: Alpha-conotoxin EpI (56 aa).

The signal sequence occupies residues Met-1–Ser-16. A propeptide spanning residues Phe-17–Lys-39 is cleaved from the precursor. Intrachain disulfides connect Cys-41/Cys-47 and Cys-42/Cys-55. The interval Ser-43–Pro-45 is ser-Xaa-Pro motif, crucial for potent interaction with nAChR. Tyr-54 carries the post-translational modification Sulfotyrosine. A Cysteine amide modification is found at Cys-55.

It belongs to the conotoxin A superfamily. Post-translationally, both tyrosine sulfation and C-terminal amidation are important for activity and structure stability. In terms of tissue distribution, expressed by the venom duct.

The protein localises to the secreted. Its function is as follows. Alpha-conotoxins act on postsynaptic membranes, they bind to the nicotinic acetylcholine receptors (nAChR) and thus inhibit them. This native peptide blocks mammalian nicotinic acetylcholine receptors composed of alpha-3-beta-2/CHRNA3-CHRNB2 and alpha-3-beta-4/CHRNA3-CHRNB4 subunits. The protein is Alpha-conotoxin EpI of Conus episcopatus (Bishop's cone).